Reading from the N-terminus, the 101-residue chain is LIRVLANLLILQLSYAQKSSELVIGGDECNINEHRFLAALYDVWSGDFLCGGTLIHPEWVLTAAHCDRYRLSIKLGMHNKNVQFDDEQSRYPKKKYFFRCR.

An N-terminal signal peptide occupies residues 1 to 16 (LIRVLANLLILQLSYA). A propeptide spanning residues 17 to 22 (QKSSEL) is cleaved from the precursor. Residues 23–101 (VIGGDECNIN…PKKKYFFRCR (79 aa)) enclose the Peptidase S1 domain. A disulfide bridge links cysteine 50 with cysteine 66. The Charge relay system role is filled by histidine 65.

This sequence belongs to the peptidase S1 family. Snake venom subfamily. In terms of assembly, monomer. Post-translationally, glycosylated. In terms of tissue distribution, expressed by the venom gland.

Its subcellular location is the secreted. Its activity is regulated as follows. Strongly inactivated by diisopropylfluorophosphate (DFP) and phenylmethanesulfonyl fluoride (PMSF), and to a lesser extent by tosyl-L-lysine chloromethyl ketone (TLCK). Thrombin-like snake venom serine protease that releases specifically fibrinopeptide B from fibrinogen (FGB) to form fibrin clots. Shows a preferential cleavage at Arg-|-Gly bonds in fibrinogen beta chains. Cleaves fibrinogen beta chains preferentially to alpha chains. The chain is Thrombin-like enzyme okinaxobin-1 from Ovophis okinavensis (Ryukyu Island pit viper).